We begin with the raw amino-acid sequence, 1350 residues long: Tectonin beta-propeller repeat-containing protein (1350 aa).

TECPR repeat units lie at residues G23 to H59, L233 to G271, D280 to G320, and K336 to G371. Low complexity predominate over residues S396–K415. 2 disordered regions span residues S396 to S420 and S671 to F691. A Galectin domain is found at Y816–R955. 4 TECPR repeats span residues M966–G1000, D1187–G1223, D1232–E1269, and S1278–G1322.

This sequence belongs to the TECPR1 family.

In terms of biological role, involved in peroxisome biogenesis. The sequence is that of Tectonin beta-propeller repeat-containing protein (Pex23) from Drosophila melanogaster (Fruit fly).